Consider the following 1171-residue polypeptide: ATP-dependent helicase/deoxyribonuclease subunit B (1171 aa).

The UvrD-like helicase ATP-binding domain occupies 1–343 (MSLRFVIGRA…LVAEENYRYR (343 aa)). An ATP-binding site is contributed by 8–15 (GRAGSGKS). The 307-residue stretch at 281 to 587 (MEQPRFHSPA…QFANIPPSLD (307 aa)) folds into the UvrD-like helicase C-terminal domain. [4Fe-4S] cluster contacts are provided by C805, C1129, C1132, and C1138.

Belongs to the helicase family. AddB/RexB type 1 subfamily. Heterodimer of AddA and AddB. Mg(2+) is required as a cofactor. Requires [4Fe-4S] cluster as cofactor.

Its function is as follows. The heterodimer acts as both an ATP-dependent DNA helicase and an ATP-dependent, dual-direction single-stranded exonuclease. Recognizes the chi site generating a DNA molecule suitable for the initiation of homologous recombination. The AddB subunit has 5' -&gt; 3' nuclease activity but not helicase activity. The sequence is that of ATP-dependent helicase/deoxyribonuclease subunit B from Bacillus thuringiensis subsp. konkukian (strain 97-27).